The sequence spans 88 residues: FXYD domain-containing ion transport regulator 3 (88 aa).

The first 20 residues, 1-20, serve as a signal peptide directing secretion; the sequence is MQEFALSLLVLLAGLPTLDA. Residues 21–38 lie on the Extracellular side of the membrane; it reads NDPEDKDSPFYYDWHSLR. The helical transmembrane segment at 39 to 59 threads the bilayer; that stretch reads VGGLICAGILCALGIIVLMSG. Residues 60 to 88 lie on the Cytoplasmic side of the membrane; the sequence is KCKCKFSQKPSHRPGDGPPLITPGSAHNC. The interval 66–88 is disordered; it reads SQKPSHRPGDGPPLITPGSAHNC.

Belongs to the FXYD family. As to quaternary structure, regulatory subunit of the sodium/potassium-transporting ATPase which is composed of a catalytic alpha subunit, a non-catalytic beta subunit and an additional regulatory subunit. Interacts with catalytic alpha subunit ATP1A1. Also interacts with non-catalytic beta subunit ATP1B1. Interacts with the alpha1-beta1, alpha2-beta1 and alpha3-beta1 NKA isozymes. Glutathionylated.

It is found in the cell membrane. Functionally, associates with and regulates the activity of the sodium/potassium-transporting ATPase (NKA) which transports Na(+) out of the cell and K(+) into the cell. Reduces glutathionylation of the NKA beta-1 subunit ATP1B1, thus reversing glutathionylation-mediated inhibition of ATP1B1. Induces a hyperpolarization-activated chloride current when expressed in Xenopus oocytes. The polypeptide is FXYD domain-containing ion transport regulator 3 (Fxyd3) (Rattus norvegicus (Rat)).